Here is a 100-residue protein sequence, read N- to C-terminus: uncharacterized protein (100 aa).

The N-terminal stretch at 1 to 17 (MTMKYFCSVMIAIALVG) is a signal peptide. Cys18 carries N-palmitoyl cysteine lipidation. A lipid anchor (S-diacylglycerol cysteine) is attached at Cys18.

Its subcellular location is the cell membrane. This is an uncharacterized protein from Salmonella paratyphi A (strain ATCC 9150 / SARB42).